Reading from the N-terminus, the 299-residue chain is B3 domain-containing transcription factor NGA2 (299 aa).

The interval 1–21 is disordered; the sequence is MNQEDKEKPIEEASSSMEREH. Positions 23–129 form a DNA-binding region, TF-B3; it reads FDKVVTPSDV…KLYIDWRRRP (107 aa). Residues 226–249 are disordered; sequence GGGGSVNSTEEESSSSGGSIPRGR.

The protein localises to the nucleus. In terms of biological role, regulates lateral organ growth. Functionally redundant with NGA1, NGA3 and NGA4. The polypeptide is B3 domain-containing transcription factor NGA2 (NGA2) (Arabidopsis thaliana (Mouse-ear cress)).